The primary structure comprises 186 residues: ATP-dependent protease subunit HslV (186 aa).

Thr13 is a catalytic residue. Na(+) contacts are provided by Ala167, Cys170, and Thr173.

Belongs to the peptidase T1B family. HslV subfamily. A double ring-shaped homohexamer of HslV is capped on each side by a ring-shaped HslU homohexamer. The assembly of the HslU/HslV complex is dependent on binding of ATP.

It is found in the cytoplasm. The enzyme catalyses ATP-dependent cleavage of peptide bonds with broad specificity.. Its activity is regulated as follows. Allosterically activated by HslU binding. Its function is as follows. Protease subunit of a proteasome-like degradation complex believed to be a general protein degrading machinery. The protein is ATP-dependent protease subunit HslV of Allorhizobium ampelinum (strain ATCC BAA-846 / DSM 112012 / S4) (Agrobacterium vitis (strain S4)).